Reading from the N-terminus, the 412-residue chain is Class E basic helix-loop-helix protein 40 (412 aa).

Residues 1–139 (MERIPSAQPP…LSGRNVETGQ (139 aa)) form an essential for interaction with BMAL1, E-box binding and repressor activity against the CLOCK-BMAL1 heterodimer region. The region spanning 52–107 (TYKLPHRLIEKKRRDRINECIAQLKDLLPEHLKLTTLGHLEKAVVLELTLKHVKAL) is the bHLH domain. The segment at 75-79 (LKDLL) is necessary for interaction with RXRA and repressor activity against RXRA. Residues 142–175 (FCSGFQTCAREVLQYLAKHENTRDLKSSQLVTHL) form the Orange domain. Residue Lys159 forms a Glycyl lysine isopeptide (Lys-Gly) (interchain with G-Cter in SUMO1, SUMO2 and SUMO3) linkage. Lys167 is covalently cross-linked (Glycyl lysine isopeptide (Lys-Gly) (interchain with G-Cter in SUMO2)). Disordered regions lie at residues 183-259 (LQGG…SEQL) and 275-309 (IGAIKQESEEPPTKKNRMQLSDDEGHFTSSDLISS). Position 235 is a phosphoserine (Ser235). The segment covering 248-259 (ESEKGDLRSEQL) has biased composition (basic and acidic residues). Residue Lys279 forms a Glycyl lysine isopeptide (Lys-Gly) (interchain with G-Cter in SUMO1); alternate linkage. Lys279 participates in a covalent cross-link: Glycyl lysine isopeptide (Lys-Gly) (interchain with G-Cter in SUMO1, SUMO2 and SUMO3); alternate. Lys279 participates in a covalent cross-link: Glycyl lysine isopeptide (Lys-Gly) (interchain with G-Cter in SUMO2); alternate. Lys288 participates in a covalent cross-link: Glycyl lysine isopeptide (Lys-Gly) (interchain with G-Cter in SUMO2). Ser383 carries the post-translational modification Phosphoserine.

Homodimer. Heterodimer with BHLHE41/DEC2. Interacts with TCF3/E47. Interacts with ubiquitin-conjugating enzyme UBE2I/UBC9. Interacts with HDAC1, SUMO1, RXRA and BMAL1. Ubiquitinated; which may lead to proteasomal degradation. In terms of processing, sumoylation inhibits its ubiquitination and promotes its negative regulation of the CLOCK-BMAL1 heterodimer transcriptional activator activity.

The protein resides in the cytoplasm. It is found in the nucleus. Its function is as follows. Transcriptional repressor involved in the regulation of the circadian rhythm by negatively regulating the activity of the clock genes and clock-controlled genes. Acts as the negative limb of a novel autoregulatory feedback loop (DEC loop) which differs from the one formed by the PER and CRY transcriptional repressors (PER/CRY loop). Both these loops are interlocked as it represses the expression of PER1/2 and in turn is repressed by PER1/2 and CRY1/2. Represses the activity of the circadian transcriptional activator: CLOCK-BMAL1|BMAL2 heterodimer by competing for the binding to E-box elements (5'-CACGTG-3') found within the promoters of its target genes. Negatively regulates its own expression and the expression of DBP and BHLHE41/DEC2. Acts as a corepressor of RXR and the RXR-LXR heterodimers and represses the ligand-induced RXRA and NR1H3/LXRA transactivation activity. May be involved in the regulation of chondrocyte differentiation via the cAMP pathway. Represses the transcription of NR0B2 and attentuates the transactivation of NR0B2 by the CLOCK-BMAL1 complex. Drives the circadian rhythm of blood pressure through transcriptional repression of ATP1B1 in the cardiovascular system. The sequence is that of Class E basic helix-loop-helix protein 40 (BHLHE40) from Pongo abelii (Sumatran orangutan).